Consider the following 559-residue polypeptide: Aspartokinase 3, chloroplastic (559 aa).

Residues 1 to 85 (MAASMQFYGV…LNKTEKKLTC (85 aa)) constitute a chloroplast transit peptide. 3 residues coordinate ATP: Lys-88, Gly-91, and Ser-120. Glu-204 provides a ligand contact to substrate. ACT domains are found at residues 402–480 (ITST…SIIS) and 481–559 (LIGN…AASS).

Belongs to the aspartokinase family. In terms of tissue distribution, highly expressed in xylem of leaves and hypocotyls, stele of roots and in trichomes after bolting. Weak expression in veins and mesophyll cells of caulone leaves, inflorescence stems, sepals, petals and stigmata.

It is found in the plastid. The protein resides in the chloroplast. The enzyme catalyses L-aspartate + ATP = 4-phospho-L-aspartate + ADP. The protein operates within amino-acid biosynthesis; L-lysine biosynthesis via DAP pathway; (S)-tetrahydrodipicolinate from L-aspartate: step 1/4. Its pathway is amino-acid biosynthesis; L-methionine biosynthesis via de novo pathway; L-homoserine from L-aspartate: step 1/3. It functions in the pathway amino-acid biosynthesis; L-threonine biosynthesis; L-threonine from L-aspartate: step 1/5. Its activity is regulated as follows. Allosterically inhibited by lysine, but not by S-adenosyl-L-methionine (SAM). K(0.5) for lysine in the presence of physiological concentrations of substrates is 7.4 uM. No inhibition by threonine or leucine and no activation or inhibition by alanine, cysteine, isoleucine, serine, valine, methionine, glutamine, asparagine, glutamic acid or arginine. Involved in the first step of essential amino acids lysine, threonine, methionine and isoleucine synthesis via the aspartate-family pathway. The protein is Aspartokinase 3, chloroplastic (AK3) of Arabidopsis thaliana (Mouse-ear cress).